The following is a 92-amino-acid chain: Probable Fe(2+)-trafficking protein (92 aa).

The protein belongs to the Fe(2+)-trafficking protein family.

Functionally, could be a mediator in iron transactions between iron acquisition and iron-requiring processes, such as synthesis and/or repair of Fe-S clusters in biosynthetic enzymes. This chain is Probable Fe(2+)-trafficking protein, found in Shewanella piezotolerans (strain WP3 / JCM 13877).